Consider the following 308-residue polypeptide: 1D-myo-inositol 2-acetamido-2-deoxy-alpha-D-glucopyranoside deacetylase (308 aa).

The Zn(2+) site is built by His-13, Asp-16, and His-147.

This sequence belongs to the MshB deacetylase family. It depends on Zn(2+) as a cofactor.

It carries out the reaction 1D-myo-inositol 2-acetamido-2-deoxy-alpha-D-glucopyranoside + H2O = 1D-myo-inositol 2-amino-2-deoxy-alpha-D-glucopyranoside + acetate. In terms of biological role, catalyzes the deacetylation of 1D-myo-inositol 2-acetamido-2-deoxy-alpha-D-glucopyranoside (GlcNAc-Ins) in the mycothiol biosynthesis pathway. The protein is 1D-myo-inositol 2-acetamido-2-deoxy-alpha-D-glucopyranoside deacetylase of Mycobacterium leprae (strain Br4923).